A 240-amino-acid chain; its full sequence is Cysteine-rich venom protein (240 aa).

The N-terminal stretch at 1–19 (MIAFIVLPILAAVLHQSSG) is a signal peptide. The 128-residue stretch at 39 to 166 (DLHNSLRRSV…KYRYFYVCQY (128 aa)) folds into the SCP domain. 8 disulfide bridges follow: Cys-75-Cys-153, Cys-92-Cys-167, Cys-148-Cys-164, Cys-186-Cys-193, Cys-189-Cys-198, Cys-202-Cys-235, Cys-211-Cys-229, and Cys-220-Cys-233. Residues 202-235 (CTQENTYSNCNSLVQQSSCQDNNMKTKCPASCFC) enclose the ShKT domain.

The protein belongs to the CRISP family. As to expression, expressed by the venom gland.

It localises to the secreted. In terms of biological role, may block ryanodine receptors (RYR). The protein is Cysteine-rich venom protein of Protobothrops mucrosquamatus (Taiwan habu).